A 597-amino-acid chain; its full sequence is Arginine--tRNA ligase (597 aa).

The 'HIGH' region signature appears at 138–148 (ANPTGPMHVGH).

Belongs to the class-I aminoacyl-tRNA synthetase family. Monomer.

The protein resides in the cytoplasm. It catalyses the reaction tRNA(Arg) + L-arginine + ATP = L-arginyl-tRNA(Arg) + AMP + diphosphate. This Nitrobacter winogradskyi (strain ATCC 25391 / DSM 10237 / CIP 104748 / NCIMB 11846 / Nb-255) protein is Arginine--tRNA ligase.